Consider the following 445-residue polypeptide: Phosphoglucosamine mutase (445 aa).

Residue serine 102 is the Phosphoserine intermediate of the active site. Serine 102, aspartate 241, aspartate 243, and aspartate 245 together coordinate Mg(2+). Serine 102 is subject to Phosphoserine.

The protein belongs to the phosphohexose mutase family. Mg(2+) serves as cofactor. Post-translationally, activated by phosphorylation.

It carries out the reaction alpha-D-glucosamine 1-phosphate = D-glucosamine 6-phosphate. Catalyzes the conversion of glucosamine-6-phosphate to glucosamine-1-phosphate. The sequence is that of Phosphoglucosamine mutase from Variovorax paradoxus (strain S110).